The sequence spans 236 residues: Small ribosomal subunit protein eS6 (236 aa).

Phosphoserine is present on residues Ser-232 and Ser-233.

Belongs to the eukaryotic ribosomal protein eS6 family. Phosphorylated.

The chain is Small ribosomal subunit protein eS6 (RPS6A) from Candida glabrata (strain ATCC 2001 / BCRC 20586 / JCM 3761 / NBRC 0622 / NRRL Y-65 / CBS 138) (Yeast).